A 60-amino-acid chain; its full sequence is uncharacterized protein (60 aa).

This is an uncharacterized protein from Methanocaldococcus jannaschii (strain ATCC 43067 / DSM 2661 / JAL-1 / JCM 10045 / NBRC 100440) (Methanococcus jannaschii).